We begin with the raw amino-acid sequence, 361 residues long: (S)-coclaurine N-methyltransferase (361 aa).

S-adenosyl-L-methionine-binding residues include Ser101, Gly139, Asn163, Gln167, Asp189, Ile190, and Val205. The active site involves Cys336.

It belongs to the CFA/CMAS family. In terms of assembly, homodimer. As to expression, highly expressed in rhizomes. Detected in roots, petioles, flower buds and leaves. Expressed between the developing stele and ground tissues near the root apical meristem, in the immature endodermis, the pericycle and the spokes of developing xylem in the apical region of the root and in the protoderm of leaf primordia in rhizomes.

It is found in the cytoplasm. The catalysed reaction is norreticuline + S-adenosyl-L-methionine = reticuline + S-adenosyl-L-homocysteine + H(+). It carries out the reaction (S)-coclaurine + S-adenosyl-L-methionine = (S)-N-methylcoclaurine + S-adenosyl-L-homocysteine + H(+). It catalyses the reaction heliamine + S-adenosyl-L-methionine = N-methylheliamine + S-adenosyl-L-homocysteine + H(+). It functions in the pathway alkaloid biosynthesis. Involved in the biosynthesis of protoberberine alkaloids. N-methyltransferase with a substrate preference for (R,S)-norreticuline but also active with dimethoxytetrahydroisoquinoline. In Thalictrum flavum subsp. glaucum (Yellow meadow rue), this protein is (S)-coclaurine N-methyltransferase.